Reading from the N-terminus, the 248-residue chain is Ubiquinone biosynthesis O-methyltransferase (248 aa).

Residues R41, G72, D93, and M136 each coordinate S-adenosyl-L-methionine.

The protein belongs to the methyltransferase superfamily. UbiG/COQ3 family.

It carries out the reaction a 3-demethylubiquinol + S-adenosyl-L-methionine = a ubiquinol + S-adenosyl-L-homocysteine + H(+). It catalyses the reaction a 3-(all-trans-polyprenyl)benzene-1,2-diol + S-adenosyl-L-methionine = a 2-methoxy-6-(all-trans-polyprenyl)phenol + S-adenosyl-L-homocysteine + H(+). It participates in cofactor biosynthesis; ubiquinone biosynthesis. Its function is as follows. O-methyltransferase that catalyzes the 2 O-methylation steps in the ubiquinone biosynthetic pathway. This Rhizobium johnstonii (strain DSM 114642 / LMG 32736 / 3841) (Rhizobium leguminosarum bv. viciae) protein is Ubiquinone biosynthesis O-methyltransferase.